The sequence spans 121 residues: Small ribosomal subunit protein bS6 (121 aa).

It belongs to the bacterial ribosomal protein bS6 family.

In terms of biological role, binds together with bS18 to 16S ribosomal RNA. This Rickettsia canadensis (strain McKiel) protein is Small ribosomal subunit protein bS6.